The sequence spans 106 residues: Putative regulatory protein MalR (106 aa).

Residues 12–106 (CSIEYTLSFM…NLMHKWGQEN (95 aa)) form the HTH hxlR-type domain.

Its function is as follows. Potential regulator of the malBH genes. In Fusobacterium mortiferum, this protein is Putative regulatory protein MalR (malR).